A 117-amino-acid polypeptide reads, in one-letter code: Large ribosomal subunit protein bL19 (117 aa).

This sequence belongs to the bacterial ribosomal protein bL19 family.

In terms of biological role, this protein is located at the 30S-50S ribosomal subunit interface and may play a role in the structure and function of the aminoacyl-tRNA binding site. This is Large ribosomal subunit protein bL19 from Bacteroides fragilis (strain ATCC 25285 / DSM 2151 / CCUG 4856 / JCM 11019 / LMG 10263 / NCTC 9343 / Onslow / VPI 2553 / EN-2).